Here is a 209-residue protein sequence, read N- to C-terminus: Protocatechuate 3,4-dioxygenase alpha chain (209 aa).

Arg-142 contacts 3,4-dihydroxybenzoate.

This sequence belongs to the intradiol ring-cleavage dioxygenase family. In terms of assembly, the enzyme is an oligomer of 12 copies of the alpha and beta chains. The cofactor is Fe(3+).

It carries out the reaction 3,4-dihydroxybenzoate + O2 = 3-carboxy-cis,cis-muconate + 2 H(+). Its pathway is aromatic compound metabolism; beta-ketoadipate pathway; 3-carboxy-cis,cis-muconate from 3,4-dihydroxybenzoate: step 1/1. Plays an essential role in the utilization of numerous aromatic and hydroaromatic compounds via the beta-ketoadipate pathway. The polypeptide is Protocatechuate 3,4-dioxygenase alpha chain (pcaG) (Acinetobacter baylyi (strain ATCC 33305 / BD413 / ADP1)).